A 296-amino-acid polypeptide reads, in one-letter code: Glycerol-3-phosphate dehydrogenase [NAD(P)+] (296 aa).

The NADPH site is built by Trp-12, Arg-31, and Lys-80. Sn-glycerol 3-phosphate contacts are provided by Lys-80, Gly-108, and Ser-110. NADPH is bound at residue Ala-112. Lys-162, Asp-215, Ser-225, Arg-226, and Asn-227 together coordinate sn-glycerol 3-phosphate. Lys-162 (proton acceptor) is an active-site residue. Arg-226 is a binding site for NADPH. NADPH is bound by residues Val-250 and Glu-252.

The protein belongs to the NAD-dependent glycerol-3-phosphate dehydrogenase family.

It is found in the cytoplasm. It catalyses the reaction sn-glycerol 3-phosphate + NAD(+) = dihydroxyacetone phosphate + NADH + H(+). The enzyme catalyses sn-glycerol 3-phosphate + NADP(+) = dihydroxyacetone phosphate + NADPH + H(+). It functions in the pathway membrane lipid metabolism; glycerophospholipid metabolism. Catalyzes the reduction of the glycolytic intermediate dihydroxyacetone phosphate (DHAP) to sn-glycerol 3-phosphate (G3P), the key precursor for phospholipid synthesis. This is Glycerol-3-phosphate dehydrogenase [NAD(P)+] from Sulfurimonas denitrificans (strain ATCC 33889 / DSM 1251) (Thiomicrospira denitrificans (strain ATCC 33889 / DSM 1251)).